Reading from the N-terminus, the 126-residue chain is Adenosine 5'-monophosphoramidase HINT1 (126 aa).

At alanine 2 the chain carries N-acetylalanine. The 109-residue stretch at 18–126 folds into the HIT domain; sequence IFGKIIRKEI…GGRQMHWPPG (109 aa). 2 positions are modified to N6-acetyllysine: lysine 21 and lysine 30. 43–44 serves as a coordination point for AMP; sequence DI. Phosphoserine occurs at positions 45 and 72. Residues asparagine 99, 105 to 107, and 112 to 114 each bind AMP; these read GQS and HLH. A Histidine triad motif motif is present at residues 110–114; sequence HVHLH. The Tele-AMP-histidine intermediate role is filled by histidine 112.

The protein belongs to the HINT family. In terms of assembly, homodimer. Interacts with CDK7. Interacts with RUVBL1 and RUVBL2 and is associated with the LEF1/TCF1-CTNNB1 complex and with a KAT5 histone acetyltransferase complex. Identified in a complex with MITF and CTNNB1. Interacts with CDC34 and RBX1, and is part of a SCF (SKP2-CUL1-F-box protein) E3 ubiquitin-protein ligase complex. Interacts with SUMO1, SUMO2 and RGS17. Interacts with the Ten-1 ICD form of TENM1. Interacts with CALM1; interaction increases in the presence of calcium ions.

Its subcellular location is the cytoplasm. The protein localises to the nucleus. The catalysed reaction is adenosine 5'-phosphoramidate + H2O = AMP + NH4(+). Exhibits adenosine 5'-monophosphoramidase activity, hydrolyzing purine nucleotide phosphoramidates with a single phosphate group such as adenosine 5'monophosphoramidate (AMP-NH2) to yield AMP and NH2. Hydrolyzes adenosine 5'monophosphomorpholidate (AMP-morpholidate) and guanosine 5'monophosphomorpholidate (GMP-morpholidate). Hydrolyzes lysyl-AMP (AMP-N-epsilon-(N-alpha-acetyl lysine methyl ester)) generated by lysine tRNA ligase, as well as Met-AMP, His-AMP and Asp-AMP, lysyl-GMP (GMP-N-epsilon-(N-alpha-acetyl lysine methyl ester)) and AMP-N-alanine methyl ester. Can also convert adenosine 5'-O-phosphorothioate and guanosine 5'-O-phosphorothioate to the corresponding nucleoside 5'-O-phosphates with concomitant release of hydrogen sulfide. In addition, functions as a scaffolding protein that modulates transcriptional activation by the LEF1/TCF1-CTNNB1 complex and by the complex formed with MITF and CTNNB1. Modulates p53/TP53 levels and p53/TP53-mediated apoptosis. Modulates proteasomal degradation of target proteins by the SCF (SKP2-CUL1-F-box protein) E3 ubiquitin-protein ligase complex. Also exhibits SUMO-specific isopeptidase activity, deconjugating SUMO1 from RANGAP1 and RGS17. This chain is Adenosine 5'-monophosphoramidase HINT1 (HINT1), found in Pongo abelii (Sumatran orangutan).